Reading from the N-terminus, the 1113-residue chain is Receptor-type guanylate cyclase gcy-18 (1113 aa).

The first 18 residues, Met1–Ala18, serve as a signal peptide directing secretion. The Extracellular segment spans residues Ile19 to Glu499. N-linked (GlcNAc...) asparagine glycans are attached at residues Asn72, Asn369, and Asn456. A helical membrane pass occupies residues Ile500 to Phe520. At Arg521–Val1113 the chain is on the cytoplasmic side. The Protein kinase domain occupies Ile543–Leu848. Residues Ser853–Asn884 adopt a coiled-coil conformation. The 131-residue stretch at Thr918–Glu1048 folds into the Guanylate cyclase domain. Residues Asp923, Ile924, and Asp967 each contribute to the Mg(2+) site.

Belongs to the adenylyl cyclase class-4/guanylyl cyclase family. Expressed specifically in AFD sensory neurons.

The protein localises to the cell membrane. It is found in the cell projection. The protein resides in the cilium. It catalyses the reaction GTP = 3',5'-cyclic GMP + diphosphate. In terms of biological role, guanylate cyclase involved in the production of the second messenger cGMP. Regulates thermotaxis responses in AFD sensory neurons. May regulate AFD neuronal activity such as calcium responses to temperature gradients. In Caenorhabditis elegans, this protein is Receptor-type guanylate cyclase gcy-18.